We begin with the raw amino-acid sequence, 675 residues long: Myosin-binding protein 3 (675 aa).

Residues 17–37 (ITVILVYAFLEWLLMFFIFLN) form a helical membrane-spanning segment. Disordered stretches follow at residues 225–274 (LRSI…EEET) and 286–315 (SKNF…TPTS). Basic and acidic residues predominate over residues 238 to 251 (AKSRVSEDEQRNDD). The 99-residue stretch at 355-453 (RTIERLRETV…QLQRELEVYR (99 aa)) folds into the GTD-binding domain. Residues 474–496 (CEADDDDKEEENREEDNSSEMDV) show a composition bias toward acidic residues. 3 disordered regions span residues 474 to 497 (CEAD…MDVD), 542 to 565 (DKES…GHGG), and 582 to 605 (AENE…GSDS). A compositionally biased stretch (basic and acidic residues) spans 596–605 (SDEKNFGSDS). The stretch at 605–633 (SEKLEIIKQVDSVYERLQELETDGEFLKN) forms a coiled coil.

Interacts with myosin XI-K.

It localises to the membrane. Membrane-anchored myosin receptors that define a distinct, plant-specific transport vesicle compartment. This chain is Myosin-binding protein 3, found in Arabidopsis thaliana (Mouse-ear cress).